The chain runs to 344 residues: N-acetyl-gamma-glutamyl-phosphate reductase (344 aa).

Cys150 is an active-site residue.

It belongs to the NAGSA dehydrogenase family. Type 1 subfamily.

The protein resides in the cytoplasm. The enzyme catalyses N-acetyl-L-glutamate 5-semialdehyde + phosphate + NADP(+) = N-acetyl-L-glutamyl 5-phosphate + NADPH + H(+). It participates in amino-acid biosynthesis; L-arginine biosynthesis; N(2)-acetyl-L-ornithine from L-glutamate: step 3/4. Its function is as follows. Catalyzes the NADPH-dependent reduction of N-acetyl-5-glutamyl phosphate to yield N-acetyl-L-glutamate 5-semialdehyde. This Pseudomonas fluorescens (strain Pf0-1) protein is N-acetyl-gamma-glutamyl-phosphate reductase.